Reading from the N-terminus, the 187-residue chain is UPF0301 protein GOX1459 (187 aa).

The protein belongs to the UPF0301 (AlgH) family.

This chain is UPF0301 protein GOX1459, found in Gluconobacter oxydans (strain 621H) (Gluconobacter suboxydans).